The following is a 488-amino-acid chain: Ribulose bisphosphate carboxylase large chain (488 aa).

Positions 127 and 177 each coordinate substrate. Lys-179 acts as the Proton acceptor in catalysis. Substrate is bound at residue Lys-181. Residues Lys-205, Asp-207, and Glu-208 each contribute to the Mg(2+) site. Lys-205 bears the N6-carboxylysine mark. His-297 acts as the Proton acceptor in catalysis. Positions 298, 330, and 382 each coordinate substrate.

Belongs to the RuBisCO large chain family. Type I subfamily. As to quaternary structure, heterohexadecamer of 8 large chains and 8 small chains. Requires Mg(2+) as cofactor.

The protein resides in the plastid. It is found in the chloroplast. The enzyme catalyses 2 (2R)-3-phosphoglycerate + 2 H(+) = D-ribulose 1,5-bisphosphate + CO2 + H2O. It carries out the reaction D-ribulose 1,5-bisphosphate + O2 = 2-phosphoglycolate + (2R)-3-phosphoglycerate + 2 H(+). In terms of biological role, ruBisCO catalyzes two reactions: the carboxylation of D-ribulose 1,5-bisphosphate, the primary event in carbon dioxide fixation, as well as the oxidative fragmentation of the pentose substrate in the photorespiration process. Both reactions occur simultaneously and in competition at the same active site. This Pyropia haitanensis (Red seaweed) protein is Ribulose bisphosphate carboxylase large chain (rbcL).